A 228-amino-acid chain; its full sequence is Ribonuclease 3 (228 aa).

In terms of domain architecture, RNase III spans 7–136 (LNKLKNEYNI…FNGALFLDQG (130 aa)). Mg(2+) is bound at residue Glu49. Asp53 is an active-site residue. Asp122 and Glu125 together coordinate Mg(2+). Glu125 is an active-site residue. In terms of domain architecture, DRBM spans 162 to 228 (DYKTDLQELL…AAKAALQKFE (67 aa)). A disordered region spans residues 207 to 228 (GEGHNKKAAEQQAAKAALQKFE). Over residues 216 to 228 (EQQAAKAALQKFE) the composition is skewed to low complexity.

It belongs to the ribonuclease III family. Homodimer. It depends on Mg(2+) as a cofactor.

It localises to the cytoplasm. It carries out the reaction Endonucleolytic cleavage to 5'-phosphomonoester.. In terms of biological role, digests double-stranded RNA. Involved in the processing of primary rRNA transcript to yield the immediate precursors to the large and small rRNAs (23S and 16S). Processes some mRNAs, and tRNAs when they are encoded in the rRNA operon. Processes pre-crRNA and tracrRNA of type II CRISPR loci if present in the organism. This Lactobacillus acidophilus (strain ATCC 700396 / NCK56 / N2 / NCFM) protein is Ribonuclease 3.